The chain runs to 648 residues: Serine/threonine-protein kinase plk-1 (648 aa).

Residues 1–24 (MNRLPNIAKPPQKSNQRKEKAPPE) are disordered. A Protein kinase domain is found at 38–289 (YEKGRFLGKG…AKQVQRDGFF (252 aa)). ATP contacts are provided by residues 44 to 52 (LGKGGFAHC) and Lys67. Asp161 functions as the Proton acceptor in the catalytic mechanism. POLO box domains are found at residues 412–492 (WISK…YMND) and 514–596 (TLRV…RLMS). Low complexity predominate over residues 612 to 629 (PRSMAAARSASAGSRGPN).

This sequence belongs to the protein kinase superfamily. Ser/Thr protein kinase family. CDC5/Polo subfamily. Interacts with mex-5, mex-6 and spat-1. In terms of tissue distribution, embryos.

The protein resides in the cytoplasm. Its subcellular location is the cytoskeleton. It is found in the microtubule organizing center. The protein localises to the centrosome. It localises to the midbody. The protein resides in the nucleus. Its subcellular location is the chromosome. It is found in the centromere. The protein localises to the kinetochore. The enzyme catalyses L-seryl-[protein] + ATP = O-phospho-L-seryl-[protein] + ADP + H(+). It catalyses the reaction L-threonyl-[protein] + ATP = O-phospho-L-threonyl-[protein] + ADP + H(+). Functionally, required for oocyte nuclear envelope breakdown before entry of oocyte into spermatheca. In meiotic cells, required for spindle dynamics and probably for spindle attachment to the chromosomes. Zygotic role in the development of the germline and nerve cord. In mitotic cells, plays a role in spindle organization and centrosome maturation. Involved in asymmetric nuclear localization of cdc-25.1 during embryogenesis which affects cell division timing. Together with plk-2, regulates cytoplasm polarity in early embryos. May play a minor role in chromosome pairing and synapsis during oocyte meiosis I. The chain is Serine/threonine-protein kinase plk-1 (plk-1) from Caenorhabditis elegans.